Consider the following 259-residue polypeptide: Small ribosomal subunit protein uS2 (259 aa).

The tract at residues 234–259 (VAEDSEEVSTVDADAITAEDFETEEV) is disordered. Positions 250 to 259 (TAEDFETEEV) are enriched in acidic residues.

It belongs to the universal ribosomal protein uS2 family.

The polypeptide is Small ribosomal subunit protein uS2 (Sulfurimonas denitrificans (strain ATCC 33889 / DSM 1251) (Thiomicrospira denitrificans (strain ATCC 33889 / DSM 1251))).